The sequence spans 439 residues: Lipase 1 (439 aa).

Residues 1–24 form the signal peptide; it reads MRCSLRMQLLLLLGLCVFISRIQG. Residues 28–60 form a disordered region; the sequence is GGEEDEEDEEEEEEEEESVEDETPEDRLQRKNI. The span at 29–51 shows a compositional bias: acidic residues; that stretch reads GEEDEEDEEEEEEEEESVEDETP. N-linked (GlcNAc...) asparagine glycosylation is found at asparagine 124 and asparagine 151. The active-site Charge relay system is the serine 197. Residues asparagine 346 and asparagine 379 are each glycosylated (N-linked (GlcNAc...) asparagine). Histidine 393 (charge relay system) is an active-site residue. Asparagine 426 carries N-linked (GlcNAc...) asparagine glycosylation.

Belongs to the AB hydrolase superfamily. Lipase family. As to expression, in 14 hours embryos expression is seen in the foregut/midgut boundary.

The protein localises to the secreted. Could be a digestive enzyme. The chain is Lipase 1 (Lip1) from Drosophila melanogaster (Fruit fly).